Here is a 356-residue protein sequence, read N- to C-terminus: Phosphate acyltransferase (356 aa).

The protein belongs to the PlsX family. As to quaternary structure, homodimer. Probably interacts with PlsY.

The protein resides in the cytoplasm. It carries out the reaction a fatty acyl-[ACP] + phosphate = an acyl phosphate + holo-[ACP]. Its pathway is lipid metabolism; phospholipid metabolism. Catalyzes the reversible formation of acyl-phosphate (acyl-PO(4)) from acyl-[acyl-carrier-protein] (acyl-ACP). This enzyme utilizes acyl-ACP as fatty acyl donor, but not acyl-CoA. The protein is Phosphate acyltransferase of Bartonella bacilliformis (strain ATCC 35685 / KC583 / Herrer 020/F12,63).